The sequence spans 413 residues: Cardiolipin synthase B (413 aa).

PLD phosphodiesterase domains are found at residues 108–135 (VFRR…SAEH) and 285–312 (RRRP…DPLS). Catalysis depends on residues His-113, Lys-115, Asp-120, His-290, Lys-292, and Asp-297. The disordered stretch occupies residues 390-413 (VDPPAQPTMETQDRVETENTGVKP).

It belongs to the phospholipase D family. Cardiolipin synthase subfamily. ClsB sub-subfamily.

It is found in the cell membrane. It carries out the reaction 2 a 1,2-diacyl-sn-glycero-3-phospho-(1'-sn-glycerol) = a cardiolipin + glycerol. Functionally, catalyzes the phosphatidyl group transfer from one phosphatidylglycerol molecule to another to form cardiolipin (CL) (diphosphatidylglycerol) and glycerol. This is Cardiolipin synthase B from Escherichia coli O157:H7.